We begin with the raw amino-acid sequence, 191 residues long: Elongation factor P (191 aa).

Belongs to the elongation factor P family.

Its subcellular location is the cytoplasm. The protein operates within protein biosynthesis; polypeptide chain elongation. Its function is as follows. Involved in peptide bond synthesis. Stimulates efficient translation and peptide-bond synthesis on native or reconstituted 70S ribosomes in vitro. Probably functions indirectly by altering the affinity of the ribosome for aminoacyl-tRNA, thus increasing their reactivity as acceptors for peptidyl transferase. This Bartonella tribocorum (strain CIP 105476 / IBS 506) protein is Elongation factor P.